The chain runs to 101 residues: MAKQSMKAREVKRVKLADKFFAKRAELKTIISDVNASDEDRWDAVLKLQTLPRDSSPSRQRNRCRQTGRPHAFLRKFGLSRIKVREAAMRGEIPGLRKASW.

The protein belongs to the universal ribosomal protein uS14 family. Part of the 30S ribosomal subunit. Contacts proteins S3 and S10.

In terms of biological role, binds 16S rRNA, required for the assembly of 30S particles and may also be responsible for determining the conformation of the 16S rRNA at the A site. In Sodalis glossinidius (strain morsitans), this protein is Small ribosomal subunit protein uS14.